We begin with the raw amino-acid sequence, 472 residues long: Alanine--anticapsin ligase (472 aa).

Glu-109 provides a ligand contact to Mg(2+). Residues Lys-138 and Lys-178 each coordinate ATP. Positions 142-355 (RAAFNRAGVK…MAQLLLDVLC (214 aa)) constitute an ATP-grasp domain. Leu-182 serves as a coordination point for Mg(2+). Residues 184–185 (SS), 226–229 (EEFL), and Gln-268 each bind ATP. Residues Glu-273 and 309–311 (HTE) contribute to the substrate site. The Mg(2+) site is built by Glu-311 and Glu-324. 328-331 (RFAG) lines the substrate pocket.

As to quaternary structure, monomer or homodimer. Mg(2+) is required as a cofactor.

The catalysed reaction is L-anticapsin + L-alanine + ATP = bacilysin + ADP + phosphate + H(+). The protein operates within antibiotic biosynthesis; bacilysin biosynthesis. Part of the bacABCDEFG operon responsible for the biosynthesis of bacilysin, an irreversible inactivator of the glutaminase domain of glucosamine synthetase. Catalyzes the formation of alpha-dipeptides from various L-amino acids in the presence of ATP. In vivo catalyzes the ligation of L-alanine and L-anticapsin (epoxycyclohexanonyl-Ala) to produce the final bacilysin antibiotic (L-Ala-L-4S-cyclohexenonyl-Ala dipeptide). The polypeptide is Alanine--anticapsin ligase (Bacillus subtilis).